The following is a 1385-amino-acid chain: PsbD mRNA maturation factor Nac2, chloroplastic (1385 aa).

The transit peptide at 1 to 45 (MGALPCPAHIEHHQGLSSFGTRRVLRQSVACGAHRSRRRSLWAGA) directs the protein to the chloroplast. A compositionally biased stretch (low complexity) spans 132–152 (GPHGAASATGAGSHSSSAGAP). 7 disordered regions span residues 132–157 (GPHG…PTPR), 263–282 (AVAA…RSSA), 304–360 (TSSR…AAGP), 387–502 (RQQP…GHGQ), 546–568 (NGAG…SGTS), 726–756 (HADS…VAAA), and 840–899 (ARRA…APSA). A compositionally biased stretch (basic and acidic residues) spans 271–281 (QPHEHQQERSS). Residues 304-313 (TSSRRGGRSS) show a composition bias toward low complexity. Over residues 403 to 412 (NGSGKSGSGG) the composition is skewed to gly residues. Composition is skewed to low complexity over residues 448 to 464 (APAA…RPAA), 554 to 568 (ASAS…SGTS), 729 to 744 (SSSS…SSSG), and 854 to 893 (ASTT…AAAG). TPR repeat units follow at residues 851–884 (RRGA…DPAS), 951–984 (GAVM…CPAD), 985–1018 (VALY…DRTD), 1019–1052 (KQLF…HPLN), 1053–1086 (TKII…DPLS), 1091–1124 (VHNR…HPNS), 1125–1158 (AALL…AGAF), 1160–1193 (AAVM…KQLN), and 1205–1238 (AWRA…APAV). Disordered regions lie at residues 1237–1257 (AVRG…GRRP) and 1333–1385 (IQDP…ADDM). Residues 1356-1365 (QDADYYEEPE) are compositionally biased toward acidic residues. Over residues 1374 to 1385 (AVRRPMPDADDM) the composition is skewed to basic and acidic residues.

As to quaternary structure, part of 2 complexes of about 600 and less than 2000 kDa, both of which also contain non-polysomal RNA.

It localises to the plastid. The protein localises to the chloroplast stroma. Functionally, involved, directly or indirectly, in the processing of the chloroplast encoded psbD mRNA to its mature form, acting via the 5'-UTR of the psbD mRNA. The last 588 amino acids of the protein are sufficient to confer stability on the transcript in vivo. In Chlamydomonas reinhardtii (Chlamydomonas smithii), this protein is PsbD mRNA maturation factor Nac2, chloroplastic (NAC2).